Reading from the N-terminus, the 367-residue chain is WD repeat-containing protein 31 (367 aa).

7 WD repeats span residues 53 to 90, 94 to 132, 137 to 175, 179 to 217, 221 to 264, 269 to 311, and 315 to 353; these read AFQEYSPAHMDTVSVVAALNSDLCVSGGKDKTVVAYNW, NVVKRFKGHEHEITKVACIPKSSQFFSASRDRMVMMWDL, QPRQQLCGHAMVVTGLAVSPDSSQLCTGSRDNTLLLWDV, QSVERASVSRNVVTHLCWVPREPYILQTSEDKTLRLWDS, QVAH…LWDL, NRIC…IWNQ, and ACLFTLSLDGSGPLTSLAVGDAISLLCASFNRGIHLLRM.

This chain is WD repeat-containing protein 31 (WDR31), found in Homo sapiens (Human).